The primary structure comprises 580 residues: Cis-3-hydroxy-L-proline dehydratase (580 aa).

Ser-66 acts as the Proton acceptor in catalysis.

Belongs to the AcnX family. Monomer. Requires Fe(3+) as cofactor.

The catalysed reaction is cis-3-hydroxy-L-proline = 1-pyrroline-2-carboxylate + H2O. Its activity is regulated as follows. Inhibited by Zn(2+), Cd(2+) and Hg(2+), but not by Co(2+), Ni(2+), Mn(2+), Sr(2+), Mg(2+), or Fe(3+). Inhibited by pyrrole-2-carboxylate and its derivative 2-thiophenecarboxylate, but not by trans-aconitate, fluorocitrate and oxalomalate, which are typical inhibitors of the aconitase enzymes. Its function is as follows. Catalyzes the dehydration of cis-3-hydroxy-L-proline (c3LHyp) to Delta(1)-pyrroline-2-carboxylate (Pyr2C). Also has activity with (2S,3S,4R)-3,4-dihydroxyproline as substrate, albeit at about 300-fold lower rate. No activity with L-proline, trans-4-hydroxy-L-proline (t4LHyp), cis-4-hydroxy-L-proline (c4LHyp), trans-3-hydroxy-L-proline (t3LHyp), D-proline, cis-4-hydroxy-D-proline (c4DHyp), trans-4-hydroxy-D-proline (t4DHyp) or L-serine as substrates. No hydro-lyase activity with citrate or cis-acotinate. Does not catalyze 2-epimerization of c3LHyp to trans-3-hydroxy-D-proline (t3DHyp). Involved in a degradation pathway that converts c3LHyp to L-proline, which would allow P.aeruginosa to grow on c3LHyp as a sole carbon source. This Pseudomonas aeruginosa (strain ATCC 15692 / DSM 22644 / CIP 104116 / JCM 14847 / LMG 12228 / 1C / PRS 101 / PAO1) protein is Cis-3-hydroxy-L-proline dehydratase.